Consider the following 265-residue polypeptide: Gap junction beta-4 protein (265 aa).

The stretch at 2 to 13 (NWGFLQGILSGV) is an intramembrane region. The Cytoplasmic segment spans residues 14–20 (NKYSTAL). Residues 21-40 (GRIWLSVVFIFRVLVYVVAA) traverse the membrane as a helical segment. The Extracellular portion of the chain corresponds to 41–73 (EEVWDDEQKDFICNTKQPGCPNVCYDEFFPVSH). Cystine bridges form between Cys53-Cys175, Cys60-Cys169, and Cys64-Cys164. A helical membrane pass occupies residues 74-94 (VRLWALQLILVTCPSLLVVMH). Over 95 to 130 (VAYREERERKHRLKHGPDAPALYSNLSKKRGGLWWT) the chain is Cytoplasmic. The chain crosses the membrane as a helical span at residues 131-151 (YLLSLIFKAAVDSGFLYIFHC). Residues 152–184 (IYKDYDMPRVVACSVQPCPHTVDCYISRPTEKK) lie on the Extracellular side of the membrane. The chain crosses the membrane as a helical span at residues 185 to 205 (VFTYFMVVTAAICILLNLSEV). Topologically, residues 206-265 (AYLVGKRCMEVFRPRRQKTSRRHQLPDTCPPYVISKGHPQDESTVLTKAGMATVDAGVYP) are cytoplasmic.

This sequence belongs to the connexin family. Beta-type (group I) subfamily. A hemichannel or connexon is composed of a hexamer of connexins. A functional gap junction is formed by the apposition of two hemichannels. Forms heteromeric channels with GJB2. In terms of tissue distribution, detected in adult heart, kidney, skin and cochlea, where it is detected in spiral ganglion, stria vascularis, spiral limbus and spiral ligament (at protein level).

It is found in the cell membrane. The protein resides in the cell junction. Its subcellular location is the gap junction. Its function is as follows. Structural component of gap junctions. Gap junctions are dodecameric channels that connect the cytoplasm of adjoining cells. They are formed by the docking of two hexameric hemichannels, one from each cell membrane. Small molecules and ions diffuse from one cell to a neighboring cell via the central pore. The sequence is that of Gap junction beta-4 protein (Gjb4) from Rattus norvegicus (Rat).